The primary structure comprises 278 residues: Protein U52 (278 aa).

Positions 1–18 are enriched in polar residues; the sequence is MTRVSSVSASCTTTNPPK. The disordered stretch occupies residues 1 to 25; that stretch reads MTRVSSVSASCTTTNPPKNTREDMS.

This sequence belongs to the herpesviridae UL79 family.

The chain is Protein U52 from Elephas maximus (Indian elephant).